The sequence spans 127 residues: Protein chibby homolog 1 (127 aa).

Residues 1 to 25 (MPLFGSIFSPKKTPPRKSASLSNLH) are disordered. Residues serine 9 and serine 20 each carry the phosphoserine modification. Positions 60–112 (VADSVISGGVDRRETQRLRKRNQQLEEENNLLRLKVDILLDMLSETTAESHLK) are minimal region for the interaction with PKD2. Positions 68–110 (GVDRRETQRLRKRNQQLEEENNLLRLKVDILLDMLSETTAESH) form a coiled coil. The leucine-zipper; mediates homodimerization stretch occupies residues 77–98 (LRKRNQQLEEENNLLRLKVDIL).

It belongs to the chibby family. Homodimer. Homodimerization is essential for nuclear localization and interaction with KPNA4 but is dispensable for interaction with CTNNB1. Interacts with polycystin-2/PKD2 and GM130. Interacts with the C-terminal region of CTNNB1. Interacts (C-terminus) with TCIM (C-terminus), TCIM competes with CTNNB1 for the interaction with CBY1. Interacts with FAM92A; this interaction facilitates targeting of FAM92A to cilium basal body. Interacts with CIBAR2. Interacts with KPNA4. In terms of tissue distribution, found in heart, brain, lung, liver, muscle, kidney and testis. Levels are approximately 3-fold higher in embryonic and adult heart than in lung or liver.

The protein resides in the nucleus speckle. Its subcellular location is the cytoplasm. It is found in the cytoskeleton. The protein localises to the cilium basal body. It localises to the microtubule organizing center. The protein resides in the centrosome. Its subcellular location is the centriole. It is found in the golgi apparatus. The protein localises to the trans-Golgi network. It localises to the cell projection. The protein resides in the cilium. Its subcellular location is the flagellum. It is found in the nucleus. Inhibits the Wnt/Wingless pathway by binding to CTNNB1/beta-catenin and inhibiting beta-catenin-mediated transcriptional activation through competition with TCF/LEF transcription factors. Has also been shown to play a role in regulating the intracellular trafficking of polycystin-2/PKD2 and possibly of other intracellular proteins. Promotes adipocyte and cardiomyocyte differentiation. This Mus musculus (Mouse) protein is Protein chibby homolog 1 (Cby1).